We begin with the raw amino-acid sequence, 376 residues long: Ribonucleoside-diphosphate reductase subunit beta (376 aa).

Asp-85, Glu-116, and His-119 together coordinate Fe cation. Tyr-123 is a catalytic residue. Fe cation is bound by residues Glu-205, Glu-239, and His-242.

Belongs to the ribonucleoside diphosphate reductase small chain family. In terms of assembly, tetramer of two alpha and two beta subunits. Fe cation is required as a cofactor.

It catalyses the reaction a 2'-deoxyribonucleoside 5'-diphosphate + [thioredoxin]-disulfide + H2O = a ribonucleoside 5'-diphosphate + [thioredoxin]-dithiol. In terms of biological role, provides the precursors necessary for DNA synthesis. Catalyzes the biosynthesis of deoxyribonucleotides from the corresponding ribonucleotides. This chain is Ribonucleoside-diphosphate reductase subunit beta (nrdB), found in Buchnera aphidicola subsp. Schizaphis graminum (strain Sg).